The chain runs to 245 residues: Fibroblast growth factor 13 (245 aa).

The interval Met-1–Thr-36 is disordered. Positions Met-1–Pro-62 are mediates targeting to the nucleus. The segment at Lys-67–Val-201 is mediates interaction with sodium channels. The tract at residues Ser-157–Gln-164 is tubulin-binding domain necessary and sufficient for tubulin-binding. Position 208 is a phosphoserine (Ser-208). Residues Thr-213–Thr-245 are disordered. Positions Phe-215 to Thr-245 are enriched in polar residues.

The protein belongs to the heparin-binding growth factors family. In terms of assembly, interacts with SCN8A; regulates SCN8A activity. Interacts with SCN1A; may regulate SCN1A activity. Interacts with SCN5A; the interaction is direct and may regulate SNC5A density at membranes and function. May also interact with SCN2A and SCN11A. Interacts with MAPK8IP2; may regulate the MAPK8IP2 scaffolding activity. May be phosphorylated. In terms of tissue distribution, detected in brain, eye and heart. In brain, the different isoforms display different patterns of expression. Expressed in brain and heart (at protein level). Isoform 3 is highly expressed in cardiac myocytes while isoform 1 is the most abundant in brain.

It is found in the cell projection. The protein localises to the filopodium. It localises to the growth cone. The protein resides in the dendrite. Its subcellular location is the cell membrane. It is found in the sarcolemma. The protein localises to the cytoplasm. It localises to the nucleus. In terms of biological role, microtubule-binding protein which directly binds tubulin and is involved in both polymerization and stabilization of microtubules. Through its action on microtubules, may participate to the refinement of axons by negatively regulating axonal and leading processes branching. Plays a crucial role in neuron polarization and migration in the cerebral cortex and the hippocampus. Regulates voltage-gated sodium channel transport and function. May also play a role in MAPK signaling. Required for the development of axonal initial segment-targeting inhibitory GABAergic synapses made by chandelier neurons. Seems not to be involved in neuroblast polarization and migration but regulates axon branching. This Mus musculus (Mouse) protein is Fibroblast growth factor 13.